The primary structure comprises 99 residues: Integration host factor subunit alpha (99 aa).

The disordered stretch occupies residues 49–73 (FGNFDLRDKNQRPGRNPKTGEDIPI).

The protein belongs to the bacterial histone-like protein family. As to quaternary structure, heterodimer of an alpha and a beta chain.

In terms of biological role, this protein is one of the two subunits of integration host factor, a specific DNA-binding protein that functions in genetic recombination as well as in transcriptional and translational control. This Serratia marcescens protein is Integration host factor subunit alpha (ihfA).